The sequence spans 815 residues: (E)-gamma-bisabolene synthase (815 aa).

Aspartate 561, aspartate 565, aspartate 709, and glutamate 717 together coordinate Mg(2+). The DDXXD motif motif lies at 561–565 (DDMYD).

It belongs to the terpene synthase family. Tpsd subfamily. It depends on Mg(2+) as a cofactor. Mn(2+) serves as cofactor.

It localises to the cytoplasm. The catalysed reaction is (2E,6E)-farnesyl diphosphate = (E)-gamma-bisabolene + diphosphate. Its pathway is terpene metabolism; oleoresin biosynthesis. In terms of biological role, involved in defensive oleoresin formation in conifers in response to insect attack or other injury. Involved in sesquiterpene (C15) olefins biosynthesis. Produces mainly (E)-gamma-bisabolene when used with farnesyl diphosphate as substrate. No activity with geranyl diphosphate or geranylgeranyl diphosphate. In Pseudotsuga menziesii (Douglas-fir), this protein is (E)-gamma-bisabolene synthase (TPS3).